Consider the following 144-residue polypeptide: Large ribosomal subunit protein uL15 (144 aa).

Residues 1–58 (MHLNTLSPAPGSHKARKRCGRGIGSGIGKTGGRGHKGQKSRSGGSVRPGFEGGQMPLK) are disordered. Over residues 21 to 31 (RGIGSGIGKTG) the composition is skewed to gly residues.

The protein belongs to the universal ribosomal protein uL15 family. As to quaternary structure, part of the 50S ribosomal subunit.

In terms of biological role, binds to the 23S rRNA. The polypeptide is Large ribosomal subunit protein uL15 (Colwellia psychrerythraea (strain 34H / ATCC BAA-681) (Vibrio psychroerythus)).